We begin with the raw amino-acid sequence, 443 residues long: Tubulin beta chain (443 aa).

Residues Q11, E69, S138, G142, T143, G144, N204, and N226 each coordinate GTP. E69 contacts Mg(2+). The segment at 424–443 is disordered; that stretch reads QYQDASAEEEGEFEGEEEEA. Residues 429–443 are compositionally biased toward acidic residues; sequence SAEEEGEFEGEEEEA.

The protein belongs to the tubulin family. In terms of assembly, dimer of alpha and beta chains. A typical microtubule is a hollow water-filled tube with an outer diameter of 25 nm and an inner diameter of 15 nM. Alpha-beta heterodimers associate head-to-tail to form protofilaments running lengthwise along the microtubule wall with the beta-tubulin subunit facing the microtubule plus end conferring a structural polarity. Microtubules usually have 13 protofilaments but different protofilament numbers can be found in some organisms and specialized cells. It depends on Mg(2+) as a cofactor.

It is found in the cytoplasm. The protein localises to the cytoskeleton. In terms of biological role, tubulin is the major constituent of microtubules, a cylinder consisting of laterally associated linear protofilaments composed of alpha- and beta-tubulin heterodimers. Microtubules grow by the addition of GTP-tubulin dimers to the microtubule end, where a stabilizing cap forms. Below the cap, tubulin dimers are in GDP-bound state, owing to GTPase activity of alpha-tubulin. This Chlamydomonas incerta protein is Tubulin beta chain (TUBB).